Here is a 334-residue protein sequence, read N- to C-terminus: Cytosolic Fe-S cluster assembly factor NUBP1 homolog (334 aa).

The tract at residues 1-24 (MSSAEVTAAAKPADAPEHCPGTAS) is disordered. [4Fe-4S] cluster-binding residues include Cys19, Cys33, Cys36, and Cys42. An ATP-binding site is contributed by 72–79 (GKGGVGKS). [4Fe-4S] cluster-binding residues include Cys247 and Cys250.

Belongs to the Mrp/NBP35 ATP-binding proteins family. NUBP1/NBP35 subfamily. As to quaternary structure, heterotetramer of 2 NUBP1 and 2 NUBP2 chains. The cofactor is [4Fe-4S] cluster.

It localises to the cytoplasm. In terms of biological role, component of the cytosolic iron-sulfur (Fe/S) protein assembly (CIA) machinery. Required for maturation of extramitochondrial Fe-S proteins. The NUBP1-NUBP2 heterotetramer forms a Fe-S scaffold complex, mediating the de novo assembly of an Fe-S cluster and its transfer to target apoproteins. This chain is Cytosolic Fe-S cluster assembly factor NUBP1 homolog, found in Culex quinquefasciatus (Southern house mosquito).